The chain runs to 424 residues: Ubiquitin carboxyl-terminal hydrolase 12/46 homolog (424 aa).

Residues 24 to 421 (FGLVNFGNTC…TGYILFYQSR (398 aa)) form the USP domain. Cys-33 (nucleophile) is an active-site residue. Residues 131 to 189 (NAGPSNGNPKATNQGGSTSAMASSIASKSSSTSNSNSNSNSTTNSNGNSSNSTGSLNAN) form a disordered region. Over residues 133–144 (GPSNGNPKATNQ) the composition is skewed to polar residues. The span at 145 to 189 (GGSTSAMASSIASKSSSTSNSNSNSNSTTNSNGNSSNSTGSLNAN) shows a compositional bias: low complexity. Residue His-369 is the Proton acceptor of the active site.

It belongs to the peptidase C19 family. As to quaternary structure, catalytic component of the Usp12-46 deubiquitylase complex consisting of Usp12-46, Wdr20 and Uaf1. The Usp12-46 deubiquitylase complex associates with arr/arrow; the interaction leads to deubiquitination and stabilization of arr/arrow.

The enzyme catalyses Thiol-dependent hydrolysis of ester, thioester, amide, peptide and isopeptide bonds formed by the C-terminal Gly of ubiquitin (a 76-residue protein attached to proteins as an intracellular targeting signal).. In terms of biological role, catalytic component of the Usp12-46 deubiquitylase complex. Deubiquitylates the wg/wingless-signaling receptor arr/arrow, which stabilizes the receptor and increases its concentration at the cell surface; this enhances the sensitivity of cells to wg/wingless-signal stimulation. This increases the amplitude and spatial range of the signaling response to the wg/wingless morphogen gradient, facilitating the precise, concentration-dependent regulation of its target genes. Required for wg/wingless-mediated signaling in the wing imaginal disc and for wg/wingless-dependent regulation of adult intestinal stem cell proliferation. Negative regulator of Notch signaling, possibly by regulating lysosomal degradation of N/Notch and affecting cell surface receptor levels; this may be context and cell-type specific function involved in external sensory organ development but not in wing imaginal-disc dorsoventral boundary signaling. Protects against HTT/huntingtin-induced polyglutamine expansion-dependent neurodegeneration. The polypeptide is Ubiquitin carboxyl-terminal hydrolase 12/46 homolog (Drosophila melanogaster (Fruit fly)).